A 358-amino-acid polypeptide reads, in one-letter code: Photosystem II protein D1 2 (358 aa).

3 helical membrane-spanning segments follow: residues tyrosine 28–isoleucine 45, histidine 117–leucine 132, and tryptophan 141–valine 155. Residue histidine 117 coordinates chlorophyll a. Residue tyrosine 125 participates in pheophytin a binding. 2 residues coordinate [CaMn4O5] cluster: aspartate 169 and glutamate 188. The chain crosses the membrane as a helical span at residues phenylalanine 196–leucine 217. Histidine 197 contacts chlorophyll a. A quinone is bound by residues histidine 214 and serine 263–phenylalanine 264. Position 214 (histidine 214) interacts with Fe cation. Histidine 271 serves as a coordination point for Fe cation. Residues phenylalanine 273–methionine 287 form a helical membrane-spanning segment. Positions 331, 332, 341, and 343 each coordinate [CaMn4O5] cluster. Positions threonine 344–glycine 358 are excised as a propeptide.

Belongs to the reaction center PufL/M/PsbA/D family. As to quaternary structure, PSII is composed of 1 copy each of membrane proteins PsbA, PsbB, PsbC, PsbD, PsbE, PsbF, PsbH, PsbI, PsbJ, PsbK, PsbL, PsbM, PsbT, PsbX, PsbY, PsbZ, Psb30/Ycf12, peripheral proteins PsbO, CyanoQ (PsbQ), PsbU, PsbV and a large number of cofactors. It forms dimeric complexes. The D1/D2 heterodimer binds P680, chlorophylls that are the primary electron donor of PSII, and subsequent electron acceptors. It shares a non-heme iron and each subunit binds pheophytin, quinone, additional chlorophylls, carotenoids and lipids. D1 provides most of the ligands for the Mn4-Ca-O5 cluster of the oxygen-evolving complex (OEC). There is also a Cl(-1) ion associated with D1 and D2, which is required for oxygen evolution. The PSII complex binds additional chlorophylls, carotenoids and specific lipids. is required as a cofactor. Post-translationally, tyr-160 forms a radical intermediate that is referred to as redox-active TyrZ, YZ or Y-Z. In terms of processing, C-terminally processed by CtpA; processing is essential to allow assembly of the oxygen-evolving complex and thus photosynthetic growth.

The protein localises to the cellular thylakoid membrane. It carries out the reaction 2 a plastoquinone + 4 hnu + 2 H2O = 2 a plastoquinol + O2. Photosystem II (PSII) is a light-driven water:plastoquinone oxidoreductase that uses light energy to abstract electrons from H(2)O, generating O(2) and a proton gradient subsequently used for ATP formation. It consists of a core antenna complex that captures photons, and an electron transfer chain that converts photonic excitation into a charge separation. The D1/D2 (PsbA/PsbD) reaction center heterodimer binds P680, the primary electron donor of PSII as well as several subsequent electron acceptors. This is Photosystem II protein D1 2 from Synechococcus sp. (strain RCC307).